The following is a 343-amino-acid chain: Protein RecA (343 aa).

ATP is bound at residue 65–72; that stretch reads GPESSGKT.

The protein belongs to the RecA family.

The protein resides in the cytoplasm. Its function is as follows. Can catalyze the hydrolysis of ATP in the presence of single-stranded DNA, the ATP-dependent uptake of single-stranded DNA by duplex DNA, and the ATP-dependent hybridization of homologous single-stranded DNAs. It interacts with LexA causing its activation and leading to its autocatalytic cleavage. This Campylobacter jejuni subsp. doylei (strain ATCC BAA-1458 / RM4099 / 269.97) protein is Protein RecA.